We begin with the raw amino-acid sequence, 116 residues long: Phosphoribosyl-AMP cyclohydrolase (116 aa).

Residue aspartate 78 participates in Mg(2+) binding. Cysteine 79 lines the Zn(2+) pocket. The Mg(2+) site is built by aspartate 80 and aspartate 82. The Zn(2+) site is built by cysteine 95 and cysteine 102.

This sequence belongs to the PRA-CH family. Homodimer. Mg(2+) serves as cofactor. It depends on Zn(2+) as a cofactor.

The protein resides in the cytoplasm. The catalysed reaction is 1-(5-phospho-beta-D-ribosyl)-5'-AMP + H2O = 1-(5-phospho-beta-D-ribosyl)-5-[(5-phospho-beta-D-ribosylamino)methylideneamino]imidazole-4-carboxamide. It participates in amino-acid biosynthesis; L-histidine biosynthesis; L-histidine from 5-phospho-alpha-D-ribose 1-diphosphate: step 3/9. Catalyzes the hydrolysis of the adenine ring of phosphoribosyl-AMP. This Acidiphilium cryptum (strain JF-5) protein is Phosphoribosyl-AMP cyclohydrolase.